The sequence spans 165 residues: Large ribosomal subunit protein uL10 (165 aa).

The protein belongs to the universal ribosomal protein uL10 family. Part of the ribosomal stalk of the 50S ribosomal subunit. The N-terminus interacts with L11 and the large rRNA to form the base of the stalk. The C-terminus forms an elongated spine to which L12 dimers bind in a sequential fashion forming a multimeric L10(L12)X complex.

In terms of biological role, forms part of the ribosomal stalk, playing a central role in the interaction of the ribosome with GTP-bound translation factors. This Sodalis glossinidius (strain morsitans) protein is Large ribosomal subunit protein uL10.